The sequence spans 126 residues: Fluoride-specific ion channel FluC (126 aa).

The next 4 membrane-spanning stretches (helical) occupy residues 2–22, 37–57, 65–85, and 101–121; these read LTFA…GAWL, WGTL…VALI, AWIR…FSTF, and AAAY…LATV. G77 and T80 together coordinate Na(+).

Belongs to the fluoride channel Fluc/FEX (TC 1.A.43) family.

Its subcellular location is the cell inner membrane. The enzyme catalyses fluoride(in) = fluoride(out). Its activity is regulated as follows. Na(+) is not transported, but it plays an essential structural role and its presence is essential for fluoride channel function. In terms of biological role, fluoride-specific ion channel. Important for reducing fluoride concentration in the cell, thus reducing its toxicity. The chain is Fluoride-specific ion channel FluC from Bordetella parapertussis (strain 12822 / ATCC BAA-587 / NCTC 13253).